A 446-amino-acid polypeptide reads, in one-letter code: Na(+)-translocating NADH-quinone reductase subunit A (446 aa).

This sequence belongs to the NqrA family. Composed of six subunits; NqrA, NqrB, NqrC, NqrD, NqrE and NqrF.

It catalyses the reaction a ubiquinone + n Na(+)(in) + NADH + H(+) = a ubiquinol + n Na(+)(out) + NAD(+). NQR complex catalyzes the reduction of ubiquinone-1 to ubiquinol by two successive reactions, coupled with the transport of Na(+) ions from the cytoplasm to the periplasm. NqrA to NqrE are probably involved in the second step, the conversion of ubisemiquinone to ubiquinol. The polypeptide is Na(+)-translocating NADH-quinone reductase subunit A (Vibrio atlanticus (strain LGP32) (Vibrio splendidus (strain Mel32))).